Reading from the N-terminus, the 737-residue chain is MPRYKTVEQVLSLMKDVTRVRNIGIIAHVDHGKTTTSDTLLAASGIISQKVAGEALALDYLSVEQQRGITVKAANISLYHEIDGKGYVINLIDTPGHVDFSGRVTRSLRVLDGSIVVIDAVEGIMTQTETVLRQSLEERVRPILFINKVDRLIKELKLSSQEIQKRLIDLIIEVNNLIETYGEPEFKDQWKIKPELGNVVFGSAKDKWGFSVPMAGKRGVKFSDVVNAYTSGDKAKIEELASKVPIHEALLDAVIKFVPNPRDSQKYRIPKIWKGDLDSEIAKAMINADPNGPIVMMINDMKVDPHAGLVATGRVFSGTLRAGEEVWLVNAKRQQRILQVSLYMGAIRELAEEIPVGNIAAALGMDAARSGETGVDIRFKDSVLGSFEKLHYISEPVVTISVEPRNPKDLTKMIDALRKLSIEDSNLVVKINEETGEYLLSGMGFLHLEVSLQLLKENYGLDVVTTPPIVVYRESIRNKSQVFEGKSPNKHNKLYISVEPLNNQTIDLIANGTIKEDMDNKEMAKILRDQAEWDYDEAKKIVAIDENINVFIDATSGVQHLREIMDTLLQGFRLAMKEGPLAFEPVRGVKVVLHDAVVHEDPAHRGPAQLYPAVRNAIFAGILTSKPTLLEPLQKLDIRIPMEYLGNVTAVITRKRGKVINVVQTGNVARVYAEIPVGESFELASELRASSAGRAFWGTEFSRWAPVPDSILVDLIMKIRERKGKPKQLPKVEDFIS.

Residues 18 to 262 enclose the tr-type G domain; the sequence is TRVRNIGIIA…AVIKFVPNPR (245 aa). GTP contacts are provided by residues 27-34, 93-97, and 147-150; these read AHVDHGKT, DTPGH, and NKVD. H604 is subject to Diphthamide.

Belongs to the TRAFAC class translation factor GTPase superfamily. Classic translation factor GTPase family. EF-G/EF-2 subfamily.

Its subcellular location is the cytoplasm. Functionally, catalyzes the GTP-dependent ribosomal translocation step during translation elongation. During this step, the ribosome changes from the pre-translocational (PRE) to the post-translocational (POST) state as the newly formed A-site-bound peptidyl-tRNA and P-site-bound deacylated tRNA move to the P and E sites, respectively. Catalyzes the coordinated movement of the two tRNA molecules, the mRNA and conformational changes in the ribosome. This chain is Elongation factor 2 (fusA), found in Sulfolobus acidocaldarius (strain ATCC 33909 / DSM 639 / JCM 8929 / NBRC 15157 / NCIMB 11770).